We begin with the raw amino-acid sequence, 357 residues long: 3-dehydroquinate synthase (357 aa).

Residues 104-108 (GVVGD), 128-129 (TT), Lys141, and 168-171 (FLET) each bind NAD(+). Zn(2+) is bound by residues Glu183, His243, and His260.

This sequence belongs to the sugar phosphate cyclases superfamily. Dehydroquinate synthase family. Co(2+) is required as a cofactor. Requires Zn(2+) as cofactor. It depends on NAD(+) as a cofactor.

Its subcellular location is the cytoplasm. It carries out the reaction 7-phospho-2-dehydro-3-deoxy-D-arabino-heptonate = 3-dehydroquinate + phosphate. The protein operates within metabolic intermediate biosynthesis; chorismate biosynthesis; chorismate from D-erythrose 4-phosphate and phosphoenolpyruvate: step 2/7. Functionally, catalyzes the conversion of 3-deoxy-D-arabino-heptulosonate 7-phosphate (DAHP) to dehydroquinate (DHQ). The protein is 3-dehydroquinate synthase of Streptococcus pyogenes serotype M49 (strain NZ131).